The sequence spans 481 residues: Ankyrin repeat, SAM and basic leucine zipper domain-containing protein 1 (481 aa).

The segment covering 1 to 10 has biased composition (low complexity); sequence MASGALRGLA. The tract at residues 1 to 23 is disordered; the sequence is MASGALRGLAVAGGGESSDSEDD. 3 positions are modified to phosphoserine: Ser-17, Ser-18, and Ser-20. ANK repeat units follow at residues 45-74, 78-107, 110-144, 148-177, 181-210, and 214-243; these read EKSE…SVDS, YGWT…NASF, DKQT…DPNI, RLMT…EVNA, NGYT…NKML, and DGKI…PLEG. In terms of domain architecture, SAM spans 272-334; it reads SYTAFGDLEI…KILSALKELE (63 aa).

Interacts with DDX4, PIWIL1, RANBP9 and TDRD1.

It is found in the cytoplasm. Plays a central role during spermatogenesis by repressing transposable elements and preventing their mobilization, which is essential for the germline integrity. Acts via the piRNA metabolic process, which mediates the repression of transposable elements during meiosis by forming complexes composed of piRNAs and Piwi proteins and governs the methylation and subsequent repression of transposons. Its association with pi-bodies suggests a participation in the primary piRNAs metabolic process. Required prior to the pachytene stage to facilitate the production of multiple types of piRNAs, including those associated with repeats involved in the regulation of retrotransposons. May act by mediating protein-protein interactions during germ cell maturation. This Eulemur macaco macaco (Black lemur) protein is Ankyrin repeat, SAM and basic leucine zipper domain-containing protein 1 (ASZ1).